Reading from the N-terminus, the 452-residue chain is cAMP/cGMP-dependent 3',5'-cAMP/cGMP phosphodiesterase A (452 aa).

The N-terminal stretch at 1–23 (MALNKKLISLLLLIFIILNIVNS) is a signal peptide. Residues 24-49 (HQQEDCDDDDEDIGISAERSERRSVK) constitute a propeptide that is removed on maturation. 3 N-linked (GlcNAc...) asparagine glycosylation sites follow: N101, N141, and N277.

This sequence belongs to the cyclic nucleotide phosphodiesterase class-II family.

The protein resides in the secreted. It localises to the extracellular space. Its subcellular location is the cell surface. The enzyme catalyses 3',5'-cyclic AMP + H2O = AMP + H(+). The catalysed reaction is 3',5'-cyclic GMP + H2O = GMP + H(+). With respect to regulation, inhibited by dithiotreitol (DTT). In terms of biological role, phosphodiesterase which displays a preference for cAMP over cGMP. Involved in the degradation of extracellular cAMP. Maintains the responsiveness of cells to the chemoattractant cAMP during the aggregation phase of development. The protein is cAMP/cGMP-dependent 3',5'-cAMP/cGMP phosphodiesterase A (pdsA) of Dictyostelium discoideum (Social amoeba).